A 257-amino-acid polypeptide reads, in one-letter code: A-factor type gamma-butyrolactone 1'-reductase (1S-forming) (257 aa).

Catalysis depends on Y161, which acts as the Proton acceptor.

Belongs to the short-chain dehydrogenases/reductases (SDR) family. Homodimer.

It carries out the reaction a (3R,4R)-3-[(1S)-1-hydroxyalkyl]-4-(hydroxymethyl)oxolan-2-one + NADP(+) = a (3R,4R)-3-alkanoyl-4-(hydroxymethyl)oxolan-2-one + NADPH + H(+). Functionally, involved in the biosynthesis of virginiae butanolide (VB), which regulates the production of antibiotic virginiamycin. Catalyzes the reduction of 6-dehydro-VB-A to VB-A, the last catalytic step in VB biosynthesis. In vitro, can use various synthetic A-factor-type analogs. The sequence is that of A-factor type gamma-butyrolactone 1'-reductase (1S-forming) from Streptomyces virginiae (Streptomyces cinnamonensis).